Reading from the N-terminus, the 784-residue chain is Probable leucine-rich repeat receptor-like protein kinase IMK3 (784 aa).

The signal sequence occupies residues 1 to 48; it reads MEFITQNQAITSLSMINTDIDQPKASLRSRFLLHLIICLLFFVPPCSS. The Extracellular portion of the chain corresponds to 49 to 409; that stretch reads QAWDGVVITQ…PSHRNLSTKD (361 aa). Asn-82 is a glycosylation site (N-linked (GlcNAc...) asparagine). LRR repeat units lie at residues 126 to 148, 150 to 172, 174 to 197, 198 to 220, 222 to 242, 247 to 268, 271 to 294, 295 to 317, 319 to 342, and 343 to 365; these read ALRK…LGLI, NLRG…LGVS, FLQT…ADSS, KLLR…LSRS, SLQF…DTWG, NLRV…SLCN, QLQD…SKLT, KLRK…LGNI, SLIH…SDLE, and SLNF…LSQK. 3 N-linked (GlcNAc...) asparagine glycosylation sites follow: Asn-203, Asn-232, and Asn-268. Asn-316 is a glycosylation site (N-linked (GlcNAc...) asparagine). 4 N-linked (GlcNAc...) asparagine glycosylation sites follow: Asn-348, Asn-353, Asn-367, and Asn-404. The helical transmembrane segment at 410–430 threads the bilayer; the sequence is IILIASGALLIVMLILVCVLC. Residues 431-784 are Cytoplasmic-facing; the sequence is CLLRKKANET…VPEASASTSQ (354 aa). The interval 441–467 is disordered; the sequence is KAKGGEAGPGAVAAKTEKGGEAEAGGE. The region spanning 488-773 is the Protein kinase domain; sequence CATAEIMGKS…TTATTSEPLI (286 aa). Residues 494–502 and Lys-516 contribute to the ATP site; that span reads MGKSTYGTV. Positions 760–784 are disordered; that stretch reads RPEETTATTSEPLIDVPEASASTSQ.

This sequence belongs to the protein kinase superfamily. Ser/Thr protein kinase family. As to quaternary structure, interacts with AGL24. Post-translationally, autophosphorylated. In terms of tissue distribution, expressed in meristems, including roots, vegetative, inflorescence and floral meristems, and in embryos.

Its subcellular location is the cell membrane. It carries out the reaction L-seryl-[protein] + ATP = O-phospho-L-seryl-[protein] + ADP + H(+). The catalysed reaction is L-threonyl-[protein] + ATP = O-phospho-L-threonyl-[protein] + ADP + H(+). In terms of biological role, can phosphorylate AGL24. This Arabidopsis thaliana (Mouse-ear cress) protein is Probable leucine-rich repeat receptor-like protein kinase IMK3 (IMK3).